The chain runs to 238 residues: Large ribosomal subunit protein uL1 (238 aa).

It belongs to the universal ribosomal protein uL1 family. In terms of assembly, part of the 50S ribosomal subunit.

In terms of biological role, binds directly to 23S rRNA. The L1 stalk is quite mobile in the ribosome, and is involved in E site tRNA release. Functionally, protein L1 is also a translational repressor protein, it controls the translation of the L11 operon by binding to its mRNA. The chain is Large ribosomal subunit protein uL1 from Nostoc sp. (strain PCC 7120 / SAG 25.82 / UTEX 2576).